The following is a 176-amino-acid chain: Lipocalin-1 (176 aa).

An N-terminal signal peptide occupies residues 1-19; that stretch reads MMRALLLAIGLGLVAALQA. A disulfide bridge connects residues cysteine 80 and cysteine 171.

Belongs to the calycin superfamily. Lipocalin family. As to quaternary structure, predominantly monomer. May form homodimer. Interacts with LMBR1L; this interaction mediates the endocytosis of LCN1.

The protein localises to the secreted. Could play a role in taste reception. Could be necessary for the concentration and delivery of sapid molecules in the gustatory system. Can bind various ligands, with chemical structures ranging from lipids and retinoids to the macrocyclic antibiotic rifampicin and even to microbial siderophores. Exhibits an extremely wide ligand pocket. The polypeptide is Lipocalin-1 (LCN1) (Sus scrofa (Pig)).